A 388-amino-acid polypeptide reads, in one-letter code: Protein-glutamate methylesterase/protein-glutamine glutaminase 4 (388 aa).

The Response regulatory domain occupies 4–121 (KVLVVDDSGF…SGDASKIKRL (118 aa)). At D55 the chain carries 4-aspartylphosphate. The disordered stretch occupies residues 137–196 (SGASAPASVPQPAKPAAPIPVREPPKPAAPVTRPAEPRAKAPPAKPEPKPEVKAAKSRRT). Over residues 148–164 (PAKPAAPIPVREPPKPA) the composition is skewed to pro residues. A CheB-type methylesterase domain is found at 197–388 (PRQDYKVVLI…FAPRLIDGVG (192 aa)). Active-site residues include S209, H236, and D332.

The protein belongs to the CheB family. In terms of processing, phosphorylated by CheA. Phosphorylation of the N-terminal regulatory domain activates the methylesterase activity.

The protein resides in the cytoplasm. It carries out the reaction [protein]-L-glutamate 5-O-methyl ester + H2O = L-glutamyl-[protein] + methanol + H(+). It catalyses the reaction L-glutaminyl-[protein] + H2O = L-glutamyl-[protein] + NH4(+). In terms of biological role, involved in chemotaxis. Part of a chemotaxis signal transduction system that modulates chemotaxis in response to various stimuli. Catalyzes the demethylation of specific methylglutamate residues introduced into the chemoreceptors (methyl-accepting chemotaxis proteins or MCP) by CheR. Also mediates the irreversible deamidation of specific glutamine residues to glutamic acid. This Hahella chejuensis (strain KCTC 2396) protein is Protein-glutamate methylesterase/protein-glutamine glutaminase 4.